The chain runs to 732 residues: Translation initiation factor eIF2B subunit epsilon (732 aa).

One can recognise a W2 domain in the interval 559–726; sequence GEEEEDFGVE…QEADEEDSDE (168 aa).

This sequence belongs to the eIF-2B gamma/epsilon subunits family. In terms of assembly, component of the translation initiation factor 2B (eIF2B) complex which is a heterodecamer of two sets of five different subunits: alpha, beta, gamma, delta and epsilon. Subunits alpha, beta and delta comprise a regulatory subcomplex and subunits epsilon and gamma comprise a catalytic subcomplex. Within the complex, the hexameric regulatory complex resides at the center, with the two heterodimeric catalytic subcomplexes bound on opposite sides.

Its subcellular location is the cytoplasm. It is found in the cytosol. Its function is as follows. Acts as a component of the translation initiation factor 2B (eIF2B) complex, which catalyzes the exchange of GDP for GTP on the eukaryotic initiation factor 2 (eIF2) complex gamma subunit. Its guanine nucleotide exchange factor activity is repressed when bound to eIF2 complex phosphorylated on the alpha subunit, thereby limiting the amount of methionyl-initiator methionine tRNA available to the ribosome and consequently global translation is repressed. In Candida albicans (strain SC5314 / ATCC MYA-2876) (Yeast), this protein is Translation initiation factor eIF2B subunit epsilon (GCD6).